Consider the following 153-residue polypeptide: Gastric inhibitory polypeptide (153 aa).

A signal peptide spans 1 to 21; it reads MVATKTFALLLLSLFLAVGLG. 2 propeptides span residues 22–50 and 95–153; these read EKKE…PRGP and EARA…LRSR. The interval 102 to 125 is disordered; it reads ASQANRKEEEAVEPQSSPAKNPSD.

This sequence belongs to the glucagon family.

The protein resides in the secreted. Potent stimulator of insulin secretion and relatively poor inhibitor of gastric acid secretion. In Homo sapiens (Human), this protein is Gastric inhibitory polypeptide (GIP).